The chain runs to 107 residues: U1-lycotoxin-Ls1a (107 aa).

An N-terminal signal peptide occupies residues 1–20 (MMKVLVVVALLVTLISYSSS). A propeptide spanning residues 21–41 (EGIDDLEADELLSLMANEQTR) is cleaved from the precursor. Cystine bridges form between cysteine 44–cysteine 59, cysteine 51–cysteine 68, cysteine 58–cysteine 86, and cysteine 70–cysteine 84.

Belongs to the neurotoxin 19 (CSTX) family. 04 (U1-Lctx) subfamily. As to expression, expressed by the venom gland.

It is found in the secreted. The sequence is that of U1-lycotoxin-Ls1a from Lycosa singoriensis (Wolf spider).